A 289-amino-acid chain; its full sequence is Early E1A protein (289 aa).

The interaction with RB1 in competition with E2F1 stretch occupies residues 41 to 49; that stretch reads PTLHELYDL. Residues 76–140 form an interaction with UBE2I region; that stretch reads EGIDLLTFPP…PSDDEDEEGE (65 aa). The disordered stretch occupies residues 82 to 107; the sequence is TFPPAPGSPEPPHLSRQPEQPEQRAL. Residues 84–93 are compositionally biased toward pro residues; it reads PPAPGSPEPP. S89 is subject to Phosphoserine; by host. Residues 113–117 carry the PXLXP motif, interaction with host ZMYND11 motif; it reads PNLVP. Positions 122 to 126 match the LXCXE motif, interaction with host RB1 and TMEM173/STING motif; the sequence is LTCHE. Residues 154-174 fold into a zinc finger; sequence CRSCHYHRRNTGDPDIMCSLC. The segment at 186 to 240 is disordered; sequence PVSEPEPEPEPEPEPARPTRRPKMAPAILRRPTSPVSRECNSSTDSCDSGPSNTP. 2 positions are modified to phosphoserine; by host: S219 and S231. The span at 219 to 237 shows a compositional bias: polar residues; sequence SPVSRECNSSTDSCDSGPS. Residues 258–289 carry the Bipartite nuclear localization signal motif; it reads RVGGRRQAVECIEDLLNEPGQPLDLSCKRPRP. Positions 279–283 match the PXDLS motif, CTBP-binding motif; sequence PLDLS.

It belongs to the adenoviridae E1A protein family. Interacts with host UBE2I; this interaction interferes with polySUMOylation. Interacts with host RB1; this interaction induces the aberrant dissociation of RB1-E2F1 complex thereby disrupting the activity of RB1 and activating E2F1-regulated genes. Interacts with host ATF7; the interaction enhances ATF7-mediated viral transactivation activity which requires the zinc binding domains of both proteins. Isoform early E1A 32 kDa protein and isoform early E1A 26 kDa protein interact (via N-terminus) with CUL1 and E3 ubiquitin ligase RBX1; these interactions inhibit RBX1-CUL1-dependent elongation reaction of ubiquitin chains and attenuate ubiquitination of SCF(FBXW7) target proteins. Interacts (via PXLXP motif) with host ZMYND11/BS69 (via MYND-type zinc finger); this interaction inhibits E1A mediated transactivation. Interacts with host EP300; this interaction stimulates the acetylation of RB1 by recruiting EP300 and RB1 into a multimeric-protein complex. Interacts with host CTBP1 and CTBP2; this interaction seems to potentiate viral replication. Interacts with host DCAF7 (ref.16). Interacts with host DYRK1A. Interacts with host KPNA4; this interaction allows E1A import into the host nucleus. Interacts with host EP400; this interaction stabilizes MYC. Interacts with host TBP protein; this interaction probably disrupts the TBP-TATA complex. Interacts (via LXCXE motif) with host TMEM173/STING; this interaction impairs the ability of TMEM173/STING to sense cytosolic DNA and promote the production of type I interferon (IFN-alpha and IFN-beta). Interacts (via C-terminus) with host ZBED1/hDREF (via C-terminus); the interaction is direct.

The protein localises to the host nucleus. Its function is as follows. Plays a role in viral genome replication by driving entry of quiescent cells into the cell cycle. Stimulation of progression from G1 to S phase allows the virus to efficiently use the cellular DNA replicating machinery to achieve viral genome replication. E1A protein has both transforming and trans-activating activities. Induces the disassembly of the E2F1 transcription factor from RB1 by direct competition for the same binding site on RB1, with subsequent transcriptional activation of E2F1-regulated S-phase genes and of the E2 region of the adenoviral genome. Release of E2F1 leads to the ARF-mediated inhibition of MDM2 and causes TP53/p53 to accumulate because it is not targeted for degradation by MDM2-mediated ubiquitination anymore. This increase in TP53, in turn, would arrest the cell proliferation and direct its death but this effect is counteracted by the viral protein E1B-55K. Inactivation of the ability of RB1 to arrest the cell cycle is critical for cellular transformation, uncontrolled cellular growth and proliferation induced by viral infection. Interaction with RBX1 and CUL1 inhibits ubiquitination of the proteins targeted by SCF(FBXW7) ubiquitin ligase complex, and may be linked to unregulated host cell proliferation. The tumorigenesis-restraining activity of E1A may be related to the disruption of the host CtBP-CtIP complex through the CtBP binding motif. Interaction with host TMEM173/STING impairs the ability of TMEM173/STING to sense cytosolic DNA and promote the production of type I interferon (IFN-alpha and IFN-beta). Promotes the sumoylation of host ZBED1/hDREF with SUMO1. In Homo sapiens (Human), this protein is Early E1A protein.